Consider the following 365-residue polypeptide: MTVMAPRTLLLLLSGALVLTETWAGSHSMRYFSTAVSRPGREEPRYIEVGYVDDTQFVRFDSDAASPRMEPRAQWVEKEGREYWEEETQRAKAFAQTFRVNLQTALGYYNQSEAGSHTIQMMSGCDLGPDGRLLRGYDQHAYDGKDYISLNEDLRSWTAADVAAQITQRKWEAANEAERTRAYLEGTCVEWLHRYLENGKETLQRAEPPKTHVTHHPVSDHEATLRCWALGFYPAEITLTWQRDGEDQTQDMELVETRPTGNGTFQKWAAVVVLSGEEHRYTCHVQHEGLPEPLTLRWEPPSQPTIPIMGIVAILAILGAVVTGAVVTAVMWRKKSSDKKGGSYSQAARSDSAQGSDVSLTACKV.

A signal peptide spans 1–24; that stretch reads MTVMAPRTLLLLLSGALVLTETWA. The tract at residues 25-114 is alpha-1; that stretch reads GSHSMRYFST…ALGYYNQSEA (90 aa). The Extracellular segment spans residues 25–308; the sequence is GSHSMRYFST…EPPSQPTIPI (284 aa). N-linked (GlcNAc...) asparagine glycosylation occurs at Asn110. The alpha-2 stretch occupies residues 115 to 206; it reads GSHTIQMMSG…ENGKETLQRA (92 aa). 2 disulfides stabilise this stretch: Cys125–Cys188 and Cys227–Cys283. The segment at 207-298 is alpha-3; the sequence is EPPKTHVTHH…GLPEPLTLRW (92 aa). An Ig-like C1-type domain is found at 209-297; the sequence is PKTHVTHHPV…EGLPEPLTLR (89 aa). The segment at 299–308 is connecting peptide; that stretch reads EPPSQPTIPI. Residues 309-332 form a helical membrane-spanning segment; it reads MGIVAILAILGAVVTGAVVTAVMW. The Cytoplasmic portion of the chain corresponds to 333–365; sequence RKKSSDKKGGSYSQAARSDSAQGSDVSLTACKV. A disordered region spans residues 337 to 361; the sequence is SDKKGGSYSQAARSDSAQGSDVSLT. The span at 346 to 359 shows a compositional bias: polar residues; it reads QAARSDSAQGSDVS. Phosphoserine is present on residues Ser356 and Ser359.

This sequence belongs to the MHC class I family. In terms of assembly, heterodimer of an alpha chain and a beta chain (beta-2-microglobulin).

It is found in the membrane. Its function is as follows. Involved in the presentation of foreign antigens to the immune system. The protein is Class I histocompatibility antigen, B alpha chain of Saguinus oedipus (Cotton-top tamarin).